Reading from the N-terminus, the 155-residue chain is 3-hydroxyacyl-[acyl-carrier-protein] dehydratase FabZ (155 aa).

Residue histidine 54 is part of the active site.

Belongs to the thioester dehydratase family. FabZ subfamily.

The protein localises to the cytoplasm. The catalysed reaction is a (3R)-hydroxyacyl-[ACP] = a (2E)-enoyl-[ACP] + H2O. Functionally, involved in unsaturated fatty acids biosynthesis. Catalyzes the dehydration of short chain beta-hydroxyacyl-ACPs and long chain saturated and unsaturated beta-hydroxyacyl-ACPs. The sequence is that of 3-hydroxyacyl-[acyl-carrier-protein] dehydratase FabZ from Burkholderia lata (strain ATCC 17760 / DSM 23089 / LMG 22485 / NCIMB 9086 / R18194 / 383).